The primary structure comprises 500 residues: Glycerol kinase (500 aa).

Position 13 (Thr-13) interacts with ADP. Positions 13, 14, and 15 each coordinate ATP. Residue Thr-13 coordinates sn-glycerol 3-phosphate. Arg-17 contacts ADP. Residues Arg-83, Glu-84, Tyr-135, and Asp-245 each coordinate sn-glycerol 3-phosphate. Arg-83, Glu-84, Tyr-135, Asp-245, and Gln-246 together coordinate glycerol. ADP is bound by residues Thr-267 and Gly-310. Positions 267, 310, 314, and 411 each coordinate ATP. ADP is bound by residues Gly-411 and Asn-415.

The protein belongs to the FGGY kinase family. Homotetramer and homodimer (in equilibrium).

It catalyses the reaction glycerol + ATP = sn-glycerol 3-phosphate + ADP + H(+). The protein operates within polyol metabolism; glycerol degradation via glycerol kinase pathway; sn-glycerol 3-phosphate from glycerol: step 1/1. Activated by phosphorylation and inhibited by fructose 1,6-bisphosphate (FBP). In terms of biological role, key enzyme in the regulation of glycerol uptake and metabolism. Catalyzes the phosphorylation of glycerol to yield sn-glycerol 3-phosphate. The protein is Glycerol kinase of Lactobacillus acidophilus (strain ATCC 700396 / NCK56 / N2 / NCFM).